A 324-amino-acid polypeptide reads, in one-letter code: MLKASLKSIASYIPEKILSNADLEKMVDTTDEWITRRTGIKERRIASENENTSDLGTKAALKAIERANLKPEDIDAILVATLSPDYFTMPSTACKIASNLGLVNISAFDISAACSGFIYLLEQAKALVESGLKKNVLIIGAEKTSSIMDYNDRSICILFGDGAGAGVVSLDNENHILDVHTASNGNYGDLLMTQRSQKSSLCQTLSMQMKGNEVFKIAVNTLSNDVVEILAKNNILAQEIDLFIPHQANLRIIKAVQEKLNLSDEKCVITVQKYGNTSAASIPMAMNDAYEEGRLKKGNLILLDAFGGGFTWGSALLKFGGENF.

Catalysis depends on residues cysteine 114 and histidine 246. Residues 247-251 (QANLR) are ACP-binding. Asparagine 276 is an active-site residue.

This sequence belongs to the thiolase-like superfamily. FabH family. As to quaternary structure, homodimer.

It localises to the cytoplasm. It carries out the reaction malonyl-[ACP] + acetyl-CoA + H(+) = 3-oxobutanoyl-[ACP] + CO2 + CoA. It participates in lipid metabolism; fatty acid biosynthesis. Its function is as follows. Catalyzes the condensation reaction of fatty acid synthesis by the addition to an acyl acceptor of two carbons from malonyl-ACP. Catalyzes the first condensation reaction which initiates fatty acid synthesis and may therefore play a role in governing the total rate of fatty acid production. Possesses both acetoacetyl-ACP synthase and acetyl transacylase activities. Its substrate specificity determines the biosynthesis of branched-chain and/or straight-chain of fatty acids. This Campylobacter jejuni subsp. jejuni serotype O:2 (strain ATCC 700819 / NCTC 11168) protein is Beta-ketoacyl-[acyl-carrier-protein] synthase III.